A 148-amino-acid chain; its full sequence is 1,4-dihydroxy-2-naphthoyl-CoA hydrolase (148 aa).

Residue D15 is part of the active site.

The protein belongs to the 4-hydroxybenzoyl-CoA thioesterase family. DHNA-CoA hydrolase subfamily.

The catalysed reaction is 1,4-dihydroxy-2-naphthoyl-CoA + H2O = 1,4-dihydroxy-2-naphthoate + CoA + H(+). The protein operates within cofactor biosynthesis; phylloquinone biosynthesis. It functions in the pathway quinol/quinone metabolism; 1,4-dihydroxy-2-naphthoate biosynthesis; 1,4-dihydroxy-2-naphthoate from chorismate: step 7/7. Catalyzes the hydrolysis of 1,4-dihydroxy-2-naphthoyl-CoA (DHNA-CoA) to 1,4-dihydroxy-2-naphthoate (DHNA), a reaction involved in phylloquinone (vitamin K1) biosynthesis. The protein is 1,4-dihydroxy-2-naphthoyl-CoA hydrolase of Nostoc sp. (strain PCC 7120 / SAG 25.82 / UTEX 2576).